Here is a 468-residue protein sequence, read N- to C-terminus: Effector protein hopD2 (468 aa).

Residues 1-20 (MNPLQPIQHSITNSQMSGGQ) are compositionally biased toward polar residues. The disordered stretch occupies residues 1–35 (MNPLQPIQHSITNSQMSGGQQLEAEGSQAHNSYSH). Residues 143–468 (DASSPPSAND…TQWRAKIALE (326 aa)) form the Tyrosine-protein phosphatase domain. C378 acts as the Phosphocysteine intermediate in catalysis.

In terms of assembly, interacts with EFR and FLS2 (via the kinase and cytoplasmic domains).

It is found in the secreted. It catalyses the reaction O-phospho-L-tyrosyl-[protein] + H2O = L-tyrosyl-[protein] + phosphate. Its activity is regulated as follows. Inhibited by sodium orthovanadate. Effector showing tyrosine-phosphatase activity required for host defense suppression. Functions inside plant cells causing suppression of HR (hypersensitive response), PR1 gene expression and oxidative burst probably by interfering with a MAPK (mitogen-activated protein kinase) pathway. MAPK cascades are known to activate defense-related transcription factors. Inhibits plant pattern-recognition receptors (PRRs) activation. The protein is Effector protein hopD2 (hopD2) of Pseudomonas syringae pv. tomato (strain ATCC BAA-871 / DC3000).